The sequence spans 645 residues: MNLCSSGATASTTSLSSTGQAERSGGVPGGGAEGGGGDGGSGNSGGGGSKTNDGSTEAPTLCFAGGSGTAGAIVGSAELSNANSPANGAGGASGSTGSGQQPTGSNGHSHLHNENNANMPPETRPKMVTVKHPESNKPKPTTKKSKPIQADQDVIKALQRCRDEGIKRLDLSKSSITVIPSTVKECVHLTELYLYSNKIGQLPPEIGCLVSLRNLALNENSLTSLPESLQNCSQLKVLDLRHNKLAEIPPVIYRLRSLTTLYLRFNRITAVADDLRQLVNLTMLSLRENKIRELGSAIGALVNLTTLDVSHNHLEHLPEDIGNCVNLSALDLQHNELLDIPDSIGNLKSLVRLGMRYNRLSSVPATLKNCKSMDEFNVEGNGITQLPDGMLASLSGLTTITLSRNQFASYPTGGPAQFTNVYSINLEHNRIDKIPYGIFSRAKGLTKLNMKENMLTALPLDIGTWVNMVELNLATNALQKLPDDIMNLQNLEILILSNNMLKKIPNTIGNLRRLRILDLEENRIEVLPHEIGLLHELQRLILQTNQITMLPRSIGHLGNLTHLSVSENNLQFLPEEIGSLESLENLYINQNPGLEKLPFELALCQNLKYLNIDKCPLSTIPPEIQAGGPSLVLQWLKMHSPYRQM.

Residues 1 to 19 (MNLCSSGATASTTSLSSTG) are compositionally biased toward low complexity. 2 disordered regions span residues 1–67 (MNLC…AGGS) and 83–151 (NSPA…IQAD). Gly residues-rich tracts occupy residues 26–49 (GVPGGGAEGGGGDGGSGNSGGGGS) and 88–97 (GAGGASGSTG). Residues 98–107 (SGQQPTGSNG) are compositionally biased toward low complexity. 20 LRR repeats span residues 165-186 (GIKRLDLSKSSITVIPSTVKEC), 188-209 (HLTELYLYSNKIGQLPPEIGCL), 211-232 (SLRNLALNENSLTSLPESLQNC), 234-255 (QLKVLDLRHNKLAEIPPVIYRL), 257-278 (SLTTLYLRFNRITAVADDLRQL), 280-301 (NLTMLSLRENKIRELGSAIGAL), 303-324 (NLTTLDVSHNHLEHLPEDIGNC), 326-347 (NLSALDLQHNELLDIPDSIGNL), 349-371 (SLVRLGMRYNRLSSVPATLKNCK), 372-393 (SMDEFNVEGNGITQLPDGMLAS), 396-417 (GLTTITLSRNQFASYPTGGPAQ), 420-441 (NVYSINLEHNRIDKIPYGIFSR), 444-465 (GLTKLNMKENMLTALPLDIGTW), 467-488 (NMVELNLATNALQKLPDDIMNL), 490-511 (NLEILILSNNMLKKIPNTIGNL), 513-534 (RLRILDLEENRIEVLPHEIGLL), 536-557 (ELQRLILQTNQITMLPRSIGHL), 559-580 (NLTHLSVSENNLQFLPEEIGSL), 582-604 (SLENLYINQNPGLEKLPFELALC), and 606-627 (NLKYLNIDKCPLSTIPPEIQAG).

It belongs to the SHOC2 family.

Acts as a Ras effector and participates in MAPK pathway activation. Probably acts as a regulatory subunit of protein phosphatase that specifically dephosphorylates Raf kinase and stimulate Raf activity at specialized signaling complexes upon Ras activation. In Drosophila yakuba (Fruit fly), this protein is Leucine-rich repeat protein soc-2 homolog (Sur-8).